The sequence spans 711 residues: Zinc finger CCCH domain-containing protein 43 (711 aa).

Positions 1–49 are disordered; it reads MPQDDDWFWGRPTPVVVGDGETTSKPKPPVAGKTKKVEEQHPRRPGEPD. Residues 35–47 are compositionally biased toward basic and acidic residues; sequence KKVEEQHPRRPGE. 3 consecutive C3H1-type zinc fingers follow at residues 44–72, 90–118, and 157–185; these read RPGE…HPDP, RPGE…HPPR, and RPGT…HPDP. The MIF4G domain occupies 384 to 637; that stretch reads LKTLKSILNT…GAISYLIEKE (254 aa).

The sequence is that of Zinc finger CCCH domain-containing protein 43 from Oryza sativa subsp. japonica (Rice).